Here is a 46-residue protein sequence, read N- to C-terminus: Hellethionin-D (46 aa).

4 disulfide bridges follow: Cys3/Cys40, Cys4/Cys32, Cys12/Cys30, and Cys16/Cys26.

Belongs to the plant thionin (TC 1.C.44) family. 4 C-C subfamily.

It is found in the secreted. In terms of biological role, thionins are small plant proteins which are toxic to animal cells. They seem to exert their toxic effect at the level of the cell membrane. Their precise function is not known. The polypeptide is Hellethionin-D (Helleborus purpurascens (Purple hellebore)).